The sequence spans 141 residues: Nucleoside diphosphate kinase (141 aa).

The ATP site is built by lysine 11, phenylalanine 59, arginine 87, threonine 93, arginine 104, and asparagine 114. The Pros-phosphohistidine intermediate role is filled by histidine 117.

It belongs to the NDK family. As to quaternary structure, homotetramer. Requires Mg(2+) as cofactor.

The protein localises to the cytoplasm. It carries out the reaction a 2'-deoxyribonucleoside 5'-diphosphate + ATP = a 2'-deoxyribonucleoside 5'-triphosphate + ADP. The enzyme catalyses a ribonucleoside 5'-diphosphate + ATP = a ribonucleoside 5'-triphosphate + ADP. Major role in the synthesis of nucleoside triphosphates other than ATP. The ATP gamma phosphate is transferred to the NDP beta phosphate via a ping-pong mechanism, using a phosphorylated active-site intermediate. The protein is Nucleoside diphosphate kinase of Hamiltonella defensa subsp. Acyrthosiphon pisum (strain 5AT).